A 610-amino-acid chain; its full sequence is UvrABC system protein C (610 aa).

The 79-residue stretch at 16–94 (SQPGVYRMYD…IKLYQPRYNV (79 aa)) folds into the GIY-YIG domain. In terms of domain architecture, UVR spans 204-239 (DQVLTQLIARMEKASQDLAFEEAARIRDQIQAVRRV).

This sequence belongs to the UvrC family. As to quaternary structure, interacts with UvrB in an incision complex.

It localises to the cytoplasm. The UvrABC repair system catalyzes the recognition and processing of DNA lesions. UvrC both incises the 5' and 3' sides of the lesion. The N-terminal half is responsible for the 3' incision and the C-terminal half is responsible for the 5' incision. This is UvrABC system protein C from Salmonella typhi.